Reading from the N-terminus, the 302-residue chain is Acetylglutamate kinase (302 aa).

Substrate contacts are provided by residues 73–74, arginine 95, and asparagine 200; that span reads GG.

The protein belongs to the acetylglutamate kinase family. ArgB subfamily.

Its subcellular location is the cytoplasm. It catalyses the reaction N-acetyl-L-glutamate + ATP = N-acetyl-L-glutamyl 5-phosphate + ADP. The protein operates within amino-acid biosynthesis; L-arginine biosynthesis; N(2)-acetyl-L-ornithine from L-glutamate: step 2/4. Catalyzes the ATP-dependent phosphorylation of N-acetyl-L-glutamate. This chain is Acetylglutamate kinase, found in Sphingopyxis alaskensis (strain DSM 13593 / LMG 18877 / RB2256) (Sphingomonas alaskensis).